The following is a 285-amino-acid chain: Homeobox protein vex1 (285 aa).

Disordered regions lie at residues 30-54 (KSGN…LPSV) and 69-88 (NEER…APQE). Residues 69-80 (NEERSPPVKDQL) show a composition bias toward basic and acidic residues. Positions 131-190 (AARARTKFSPEQLEELERSFKENRYIGSSEKRRLSKVLKLSETQIKTWFQNRRMKFKRQT) form a DNA-binding region, homeobox.

In terms of tissue distribution, widely expressed in the embryo prior to gastrulation. Becomes restricted to the ventral marginal zone by mid/late gastrulation. Ventral localization persists during gastrulation and neurulation in the ventral region of the closed blastopore and in the proctodeum during tail bud stages.

The protein localises to the nucleus. Transcriptional repressor. Acts in a ventral signaling pathway downstream of bmp4 to antagonize the Spemann organizer and ventrally pattern the embryonic mesoderm. Represses transcription of the dorsal genes gsc and otx2. The protein is Homeobox protein vex1 of Xenopus laevis (African clawed frog).